The primary structure comprises 471 residues: Alpha-galactosidase (471 aa).

An N-terminal signal peptide occupies residues 1-18 (MFLLYLFTSFAAVSGVLG). Cys-42 and Cys-74 are joined by a disulfide. The substrate site is built by Asp-72 and Asp-73. Asn-82 carries N-linked (GlcNAc...) asparagine glycosylation. A disulfide bond links Cys-121 and Cys-151. Lys-147 is a binding site for substrate. Catalysis depends on Asp-149, which acts as the Nucleophile. A glycan (N-linked (GlcNAc...) asparagine) is linked at Asn-175. Arg-205 provides a ligand contact to substrate. The Proton donor role is filled by Asp-209. Cystine bridges form between Cys-221–Cys-237 and Cys-223–Cys-230. Gln-251 contacts substrate. N-linked (GlcNAc...) asparagine glycosylation is found at Asn-270, Asn-403, Asn-412, Asn-417, Asn-422, Asn-435, and Asn-454.

Belongs to the glycosyl hydrolase 27 family. Homotetramer.

Its subcellular location is the secreted. It carries out the reaction Hydrolysis of terminal, non-reducing alpha-D-galactose residues in alpha-D-galactosides, including galactose oligosaccharides, galactomannans and galactolipids.. This chain is Alpha-galactosidase (MEL), found in Saccharomyces pastorianus (strain ATCC 76529 / Carlsberg bottom yeast no.1 / CBS 1513 / CLIB 176 / NBRC 1167 / NCYC 396 / NRRL Y-12693) (Saaz-type lager yeast).